Here is a 198-residue protein sequence, read N- to C-terminus: MNLIMGYTYLIPILFASYLIGSIPFSWILVKVFYKRDLRSVGSGNIGATNAFRVNRGISFLVLLLDIFKSVLVILILEKMCAHKSIMYLTGFTVVLGHIFPVWFLFKGGKGIAPTIGVVLSINIKIFFLFIITWAVVFMIFRYSSLSSIISIISSCIYCAVTENFNSSIFYIAMSIIVLIKHRDNVIRMINGTEKKLF.

5 consecutive transmembrane segments (helical) span residues 10–30, 57–77, 86–106, 118–138, and 160–180; these read LIPI…WILV, GISF…ILIL, IMYL…WFLF, VVLS…AVVF, and AVTE…IVLI.

This sequence belongs to the PlsY family. Probably interacts with PlsX.

Its subcellular location is the cell inner membrane. The enzyme catalyses an acyl phosphate + sn-glycerol 3-phosphate = a 1-acyl-sn-glycero-3-phosphate + phosphate. The protein operates within lipid metabolism; phospholipid metabolism. In terms of biological role, catalyzes the transfer of an acyl group from acyl-phosphate (acyl-PO(4)) to glycerol-3-phosphate (G3P) to form lysophosphatidic acid (LPA). This enzyme utilizes acyl-phosphate as fatty acyl donor, but not acyl-CoA or acyl-ACP. In Anaplasma marginale (strain St. Maries), this protein is Glycerol-3-phosphate acyltransferase.